The following is a 358-amino-acid chain: Pyruvate dehydrogenase E1 component subunit alpha (358 aa).

Heterodimer of an alpha and a beta chain. Thiamine diphosphate serves as cofactor.

The enzyme catalyses N(6)-[(R)-lipoyl]-L-lysyl-[protein] + pyruvate + H(+) = N(6)-[(R)-S(8)-acetyldihydrolipoyl]-L-lysyl-[protein] + CO2. Its function is as follows. The pyruvate dehydrogenase complex catalyzes the overall conversion of pyruvate to acetyl-CoA and CO(2). It contains multiple copies of three enzymatic components: pyruvate dehydrogenase (E1), dihydrolipoamide acetyltransferase (E2) and lipoamide dehydrogenase (E3). This chain is Pyruvate dehydrogenase E1 component subunit alpha (pdhA), found in Mycoplasma pneumoniae (strain ATCC 29342 / M129 / Subtype 1) (Mycoplasmoides pneumoniae).